Reading from the N-terminus, the 227-residue chain is Cytosolic-abundant heat soluble protein 106094 (227 aa).

The disordered stretch occupies residues 1–28 (MEAMNMNIPRDAMFVPPPESEQNGYHEK). The stretch at 90–140 (VEEARRDYAAKTRENEMLGQQYEKELERKSEAYRKHQEVEADKIRKELEKQ) forms a coiled coil. CAHS motif stretches follow at residues 122 to 140 (YRKHQEVEADKIRKELEKQ) and 159 to 177 (QKRMIDLECRYAKKDMDRE). The tract at residues 198–227 (LDSSAAGTESGGHVVSQSEKFTERNREMKR) is disordered. A compositionally biased stretch (basic and acidic residues) spans 217-227 (KFTERNREMKR).

It belongs to the Cytosolic-abundant heat soluble protein (CAHS) family.

It is found in the cytoplasm. Functionally, CAHS proteins are cytosolic heat soluble proteins that seem to contribute to the anhydrobiosis in tardigrades, but their specific mechanisms are yet to be identified. It is possible that protection during anhydrobiosis might occur via the stabilization of vitrifying small molecules such as sugars, but not via the direct glass transition of CAHS proteins themselves. The polypeptide is Cytosolic-abundant heat soluble protein 106094 (Paramacrobiotus richtersi (Water bear)).